Reading from the N-terminus, the 218-residue chain is MGGVSTARPVIGVLALQGGVAEHLTALERSGAEARPVRRPEELAQVHGLVLPGGESTAMTRLLDGFELFEPLRERLAAGMPAFGSCAGMVLLAGTVLDDRVEQDTPPVRPFGAIDMAVRRNAFGRQVDSFEADLDFAGVTDGPVHAVFIRAPWVDKVGADVRVLASVAPSGHGSEVTAPAGRIVAVQQGPVLATAFHPELVSGDERVHRYFVQTVRAS.

Position 54 to 56 (54 to 56) interacts with L-glutamine; sequence GES. The Nucleophile role is filled by C86. L-glutamine-binding positions include R120 and 149–150; that span reads IR. Catalysis depends on charge relay system residues H197 and E199.

It belongs to the glutaminase PdxT/SNO family. As to quaternary structure, in the presence of PdxS, forms a dodecamer of heterodimers. Only shows activity in the heterodimer.

It carries out the reaction aldehydo-D-ribose 5-phosphate + D-glyceraldehyde 3-phosphate + L-glutamine = pyridoxal 5'-phosphate + L-glutamate + phosphate + 3 H2O + H(+). The enzyme catalyses L-glutamine + H2O = L-glutamate + NH4(+). It functions in the pathway cofactor biosynthesis; pyridoxal 5'-phosphate biosynthesis. Functionally, catalyzes the hydrolysis of glutamine to glutamate and ammonia as part of the biosynthesis of pyridoxal 5'-phosphate. The resulting ammonia molecule is channeled to the active site of PdxS. The polypeptide is Pyridoxal 5'-phosphate synthase subunit PdxT (Saccharopolyspora erythraea (strain ATCC 11635 / DSM 40517 / JCM 4748 / NBRC 13426 / NCIMB 8594 / NRRL 2338)).